A 359-amino-acid chain; its full sequence is WAT1-related protein At4g16620 (359 aa).

The next 10 helical transmembrane spans lie at 5 to 25 (ETLI…IYAG), 41 to 61 (LLIV…LAFL), 77 to 97 (IKLV…FLEG), 105 to 125 (MATA…WAAG), 143 to 163 (TVLC…TATL), 183 to 203 (ILGC…IVLQ), 206 to 226 (ILAE…MGGI), 246 to 266 (VIGL…SGGG), 279 to 299 (PVIV…VSAF), and 305 to 325 (FNLG…FVLW). Residues 30–154 (LSQLLSLGID…LCVMGALIMS (125 aa)) enclose the EamA 1 domain. Positions 206 to 324 (ILAEFPAPIS…LMFGGLYFVL (119 aa)) constitute an EamA 2 domain.

This sequence belongs to the drug/metabolite transporter (DMT) superfamily. Plant drug/metabolite exporter (P-DME) (TC 2.A.7.4) family.

It localises to the membrane. This chain is WAT1-related protein At4g16620, found in Arabidopsis thaliana (Mouse-ear cress).